The chain runs to 80 residues: Large ribosomal subunit protein uL24 (80 aa).

Belongs to the universal ribosomal protein uL24 family. As to quaternary structure, part of the 50S ribosomal subunit.

One of two assembly initiator proteins, it binds directly to the 5'-end of the 23S rRNA, where it nucleates assembly of the 50S subunit. Functionally, one of the proteins that surrounds the polypeptide exit tunnel on the outside of the subunit. This Chlorobium phaeovibrioides (strain DSM 265 / 1930) (Prosthecochloris vibrioformis (strain DSM 265)) protein is Large ribosomal subunit protein uL24.